We begin with the raw amino-acid sequence, 89 residues long: Ribonuclease P protein component 1 (89 aa).

This sequence belongs to the eukaryotic/archaeal RNase P protein component 1 family. As to quaternary structure, consists of a catalytic RNA component and at least 4-5 protein subunits.

It is found in the cytoplasm. It catalyses the reaction Endonucleolytic cleavage of RNA, removing 5'-extranucleotides from tRNA precursor.. In terms of biological role, part of ribonuclease P, a protein complex that generates mature tRNA molecules by cleaving their 5'-ends. This chain is Ribonuclease P protein component 1, found in Thermoplasma volcanium (strain ATCC 51530 / DSM 4299 / JCM 9571 / NBRC 15438 / GSS1).